An 87-amino-acid chain; its full sequence is Small ribosomal subunit protein bS20 (87 aa).

The protein belongs to the bacterial ribosomal protein bS20 family.

Binds directly to 16S ribosomal RNA. This is Small ribosomal subunit protein bS20 from Corynebacterium diphtheriae (strain ATCC 700971 / NCTC 13129 / Biotype gravis).